We begin with the raw amino-acid sequence, 210 residues long: MPMADHPATPAVVLAGGLAQRMGGGDKPLREIAGRSLLARVIDRLAPQCDTLALNANGDPARFAGFGLPVIADPVDGFPGPLAGVLAGLDWIAAHRPDAEWMLSAPADCPFLPSDLVVRLHQARLDQQADIAVAASAGRSHPVIALWPCRLQIDLRRALLADDIRKVDRFTARYPRAIVEWPVQPFDPFFNANTPEDVAEAERIALRDSR.

GTP-binding positions include 14–16 (LAG), K27, N55, D73, and D108. A Mg(2+)-binding site is contributed by D108.

The protein belongs to the MobA family. In terms of assembly, monomer. Mg(2+) serves as cofactor.

Its subcellular location is the cytoplasm. The catalysed reaction is Mo-molybdopterin + GTP + H(+) = Mo-molybdopterin guanine dinucleotide + diphosphate. Its function is as follows. Transfers a GMP moiety from GTP to Mo-molybdopterin (Mo-MPT) cofactor (Moco or molybdenum cofactor) to form Mo-molybdopterin guanine dinucleotide (Mo-MGD) cofactor. This Rhodopseudomonas palustris (strain BisB5) protein is Molybdenum cofactor guanylyltransferase.